The chain runs to 337 residues: Ketol-acid reductoisomerase (NADP(+)) (337 aa).

The 181-residue stretch at 3–183 (VEVFYDDDAD…GGTRAGAIRT (181 aa)) folds into the KARI N-terminal Rossmann domain. NADP(+) is bound by residues 26–29 (YGSQ), Ser-52, Ser-54, and 84–87 (DTAQ). Residue His-109 is part of the active site. Gly-135 is a binding site for NADP(+). The 146-residue stretch at 184-329 (TFTEETETDL…SKLRGMMSWV (146 aa)) folds into the KARI C-terminal knotted domain. Residues Asp-192, Glu-196, Glu-228, and Glu-232 each coordinate Mg(2+). Ser-253 is a binding site for substrate.

It belongs to the ketol-acid reductoisomerase family. Requires Mg(2+) as cofactor.

It catalyses the reaction (2R)-2,3-dihydroxy-3-methylbutanoate + NADP(+) = (2S)-2-acetolactate + NADPH + H(+). The catalysed reaction is (2R,3R)-2,3-dihydroxy-3-methylpentanoate + NADP(+) = (S)-2-ethyl-2-hydroxy-3-oxobutanoate + NADPH + H(+). Its pathway is amino-acid biosynthesis; L-isoleucine biosynthesis; L-isoleucine from 2-oxobutanoate: step 2/4. The protein operates within amino-acid biosynthesis; L-valine biosynthesis; L-valine from pyruvate: step 2/4. Its function is as follows. Involved in the biosynthesis of branched-chain amino acids (BCAA). Catalyzes an alkyl-migration followed by a ketol-acid reduction of (S)-2-acetolactate (S2AL) to yield (R)-2,3-dihydroxy-isovalerate. In the isomerase reaction, S2AL is rearranged via a Mg-dependent methyl migration to produce 3-hydroxy-3-methyl-2-ketobutyrate (HMKB). In the reductase reaction, this 2-ketoacid undergoes a metal-dependent reduction by NADPH to yield (R)-2,3-dihydroxy-isovalerate. The sequence is that of Ketol-acid reductoisomerase (NADP(+)) from Salinispora arenicola (strain CNS-205).